Reading from the N-terminus, the 245-residue chain is Biosynthetic peptidoglycan transglycosylase (245 aa).

The helical transmembrane segment at 20–42 threads the bilayer; the sequence is VYAGSVFAGAWLATQLFYLAQIA.

The protein belongs to the glycosyltransferase 51 family.

It localises to the cell inner membrane. The catalysed reaction is [GlcNAc-(1-&gt;4)-Mur2Ac(oyl-L-Ala-gamma-D-Glu-L-Lys-D-Ala-D-Ala)](n)-di-trans,octa-cis-undecaprenyl diphosphate + beta-D-GlcNAc-(1-&gt;4)-Mur2Ac(oyl-L-Ala-gamma-D-Glu-L-Lys-D-Ala-D-Ala)-di-trans,octa-cis-undecaprenyl diphosphate = [GlcNAc-(1-&gt;4)-Mur2Ac(oyl-L-Ala-gamma-D-Glu-L-Lys-D-Ala-D-Ala)](n+1)-di-trans,octa-cis-undecaprenyl diphosphate + di-trans,octa-cis-undecaprenyl diphosphate + H(+). It functions in the pathway cell wall biogenesis; peptidoglycan biosynthesis. Its function is as follows. Peptidoglycan polymerase that catalyzes glycan chain elongation from lipid-linked precursors. The protein is Biosynthetic peptidoglycan transglycosylase of Burkholderia orbicola (strain MC0-3).